The sequence spans 219 residues: Ribose-5-phosphate isomerase A (219 aa).

Substrate contacts are provided by residues 28–31 (SGST), 81–84 (DGAD), and 94–97 (KGGG). E103 (proton acceptor) is an active-site residue. Substrate is bound at residue K121.

Belongs to the ribose 5-phosphate isomerase family. As to quaternary structure, homodimer.

The catalysed reaction is aldehydo-D-ribose 5-phosphate = D-ribulose 5-phosphate. The protein operates within carbohydrate degradation; pentose phosphate pathway; D-ribose 5-phosphate from D-ribulose 5-phosphate (non-oxidative stage): step 1/1. In terms of biological role, catalyzes the reversible conversion of ribose-5-phosphate to ribulose 5-phosphate. The sequence is that of Ribose-5-phosphate isomerase A from Mannheimia succiniciproducens (strain KCTC 0769BP / MBEL55E).